A 1257-amino-acid chain; its full sequence is Protein flightless-1 homolog (1257 aa).

LRR repeat units lie at residues 6 to 31 (LQFVKGIDFSGNDFSGDRFPHDVEQM), 32 to 54 (TQMTWLKLNDSKLEQVPDELSRC), 56 to 77 (NLEHLQMAHNQLISVHGELSDL), 78 to 102 (PRLRSVIVRDNNLKTAGIPTDIFRM), 103 to 126 (KDLTIIDLSRNQLREVPTNLEYAK), 128 to 148 (SIVLNLSYNNIETIPNSVCAN), 149 to 172 (LIDLLFLDLSNNKLDMLPPQIRRL), 174 to 195 (MLQSLKLSNNPLNHFQLKQLPS), 197 to 221 (TSLSVLHMSNTNRTLDNIPPTLDDM), 222 to 244 (HNLRDVDFSENNLPIVPEALFKL), 246 to 267 (NLRKLNLSGNKIEKLNMTEGEW), 268 to 290 (ENLETLNMSHNQLTVLPDCVVKL), 292 to 315 (RLTKLYAANNQLTFEGIPSGIGKL), 316 to 338 (IQLTVLHLSYNKLELVPEGISRC), 339 to 361 (VKLQKLKLDHNRLITLPEGIHLL), and 363 to 384 (DLKVLDLHENENLVMPPKPNDA). 4 Gelsolin-like repeats span residues 523 to 600 (MDEA…EEFL), 640 to 714 (AVEM…PEFW), 759 to 832 (ELPK…MMFR), and 1168 to 1243 (EKTV…CRFR).

This sequence belongs to the villin/gelsolin family.

In terms of biological role, may play a key role in embryonic cellularization by interacting with both the cytoskeleton and other cellular components. The protein is Protein flightless-1 homolog (fli-1) of Caenorhabditis elegans.